Reading from the N-terminus, the 293-residue chain is Ribosomal protein L11 methyltransferase (293 aa).

Positions 145, 166, 188, and 230 each coordinate S-adenosyl-L-methionine.

This sequence belongs to the methyltransferase superfamily. PrmA family.

It localises to the cytoplasm. It catalyses the reaction L-lysyl-[protein] + 3 S-adenosyl-L-methionine = N(6),N(6),N(6)-trimethyl-L-lysyl-[protein] + 3 S-adenosyl-L-homocysteine + 3 H(+). Its function is as follows. Methylates ribosomal protein L11. The sequence is that of Ribosomal protein L11 methyltransferase from Pasteurella multocida (strain Pm70).